The sequence spans 352 residues: Protein RecA (352 aa).

ATP is bound at residue 67 to 74 (GPESSGKT).

Belongs to the RecA family.

The protein resides in the cytoplasm. Its function is as follows. Can catalyze the hydrolysis of ATP in the presence of single-stranded DNA, the ATP-dependent uptake of single-stranded DNA by duplex DNA, and the ATP-dependent hybridization of homologous single-stranded DNAs. It interacts with LexA causing its activation and leading to its autocatalytic cleavage. This chain is Protein RecA, found in Chlamydia trachomatis serovar A (strain ATCC VR-571B / DSM 19440 / HAR-13).